The sequence spans 393 residues: L-rhamnonate dehydratase (393 aa).

Substrate is bound by residues His22 and Arg48. Asp214, Glu241, and Glu269 together coordinate Mg(2+). Catalysis depends on His319, which acts as the Proton acceptor. A substrate-binding site is contributed by Glu339.

This sequence belongs to the mandelate racemase/muconate lactonizing enzyme family. RhamD subfamily. Homooctamer; tetramer of dimers. Mg(2+) is required as a cofactor.

The enzyme catalyses L-rhamnonate = 2-dehydro-3-deoxy-L-rhamnonate + H2O. Its function is as follows. Catalyzes the dehydration of L-rhamnonate to 2-keto-3-deoxy-L-rhamnonate (KDR). In Azorhizobium caulinodans (strain ATCC 43989 / DSM 5975 / JCM 20966 / LMG 6465 / NBRC 14845 / NCIMB 13405 / ORS 571), this protein is L-rhamnonate dehydratase.